Here is a 379-residue protein sequence, read N- to C-terminus: Deoxyguanosinetriphosphate triphosphohydrolase-like protein (379 aa).

Positions 69–200 (RLTHTIEVAQ…ANLADEIAYS (132 aa)) constitute an HD domain.

It belongs to the dGTPase family. Type 2 subfamily.

The sequence is that of Deoxyguanosinetriphosphate triphosphohydrolase-like protein from Azoarcus sp. (strain BH72).